The chain runs to 190 residues: dTTP/UTP pyrophosphatase (190 aa).

Asp67 acts as the Proton acceptor in catalysis.

This sequence belongs to the Maf family. YhdE subfamily. A divalent metal cation is required as a cofactor.

Its subcellular location is the cytoplasm. It catalyses the reaction dTTP + H2O = dTMP + diphosphate + H(+). The catalysed reaction is UTP + H2O = UMP + diphosphate + H(+). Its function is as follows. Nucleoside triphosphate pyrophosphatase that hydrolyzes dTTP and UTP. May have a dual role in cell division arrest and in preventing the incorporation of modified nucleotides into cellular nucleic acids. The protein is dTTP/UTP pyrophosphatase of Aquifex aeolicus (strain VF5).